A 346-amino-acid chain; its full sequence is NADH-ubiquinone oxidoreductase chain 2 (346 aa).

11 helical membrane passes run 1–21 (MNPH…TITI), 25–45 (HWIM…PLIS), 60–80 (FLVQ…NAWA), 96–116 (MLLT…FWFP), 124–144 (LTTA…ILLM), 149–169 (LNPT…GWMG), 178–198 (ILAF…IYNP), 200–220 (LTLL…LSLN), 242–262 (AALM…GFMP), 274–294 (EMTT…FFYL), and 325–345 (IAIL…ILAA).

This sequence belongs to the complex I subunit 2 family.

The protein resides in the mitochondrion inner membrane. The enzyme catalyses a ubiquinone + NADH + 5 H(+)(in) = a ubiquinol + NAD(+) + 4 H(+)(out). In terms of biological role, core subunit of the mitochondrial membrane respiratory chain NADH dehydrogenase (Complex I) that is believed to belong to the minimal assembly required for catalysis. Complex I functions in the transfer of electrons from NADH to the respiratory chain. The immediate electron acceptor for the enzyme is believed to be ubiquinone. The protein is NADH-ubiquinone oxidoreductase chain 2 (MT-ND2) of Struthio camelus (Common ostrich).